Reading from the N-terminus, the 108-residue chain is Translation initiation factor 1A (108 aa).

An S1-like domain is found at 10-84 (IRVITPNKKS…EKGDIIYRYT (75 aa)).

The protein belongs to the eIF-1A family.

In terms of biological role, seems to be required for maximal rate of protein biosynthesis. Enhances ribosome dissociation into subunits and stabilizes the binding of the initiator Met-tRNA(I) to 40 S ribosomal subunits. This Picrophilus torridus (strain ATCC 700027 / DSM 9790 / JCM 10055 / NBRC 100828 / KAW 2/3) protein is Translation initiation factor 1A.